Consider the following 214-residue polypeptide: EEF1A lysine methyltransferase 1 (214 aa).

An N-acetylserine modification is found at S2. S2 is modified (phosphoserine).

The protein belongs to the class I-like SAM-binding methyltransferase superfamily. EFM5 family.

Its subcellular location is the cytoplasm. It catalyses the reaction L-lysyl-[protein] + 3 S-adenosyl-L-methionine = N(6),N(6),N(6)-trimethyl-L-lysyl-[protein] + 3 S-adenosyl-L-homocysteine + 3 H(+). In terms of biological role, protein N-lysine methyltransferase that selectively catalyzes the trimethylation of EEF1A at 'Lys-79'. The protein is EEF1A lysine methyltransferase 1 of Homo sapiens (Human).